The following is a 194-amino-acid chain: dCTP deaminase (194 aa).

Residues Arg110–Arg115, Asp128, Val136–Glu138, Tyr171, Lys178, and Gln182 contribute to the dCTP site. Residue Glu138 is the Proton donor/acceptor of the active site.

Belongs to the dCTP deaminase family. As to quaternary structure, homotrimer.

It catalyses the reaction dCTP + H2O + H(+) = dUTP + NH4(+). It participates in pyrimidine metabolism; dUMP biosynthesis; dUMP from dCTP (dUTP route): step 1/2. Catalyzes the deamination of dCTP to dUTP. This chain is dCTP deaminase, found in Histophilus somni (strain 2336) (Haemophilus somnus).